Consider the following 430-residue polypeptide: MSEREVRLWPEFVKALKQEVVPALGCTEPISLALAAALAARELGKAPERIDAWVSANLMKNGMGVTVPGTGTVGLPIAAAVGALGGDPDAKLEVLKNLTVEQVAAGKQMLADGKVKLGVAAVPNILYAEACVWHGDECARVAIADAHTNVIKIELNGEVKLKREAADAKPVETYDLGDATARDVYDFAMRAPLDSIAFIHDAAVLNSALADEGMSGKYGLHIGATLQRQIEAGLLSEGLLSNILTRTTAASDARMGGATLPAMSNSGSGNQGIAATMPVVAVAEHVKADRETLIRALALSHLIAVYIHTRLPKLSALCAVTTASMGAAAGMAQLLNGGYPAVSMAISSMIGDLAGMICDGASNSCAMKVSTSAGSGYKAVLMALDGTRVTGNEGIVAHDVDVSIANLGKLATQGMAQTDTQILQIMMDKR.

Belongs to the UPF0597 family.

In Chromobacterium violaceum (strain ATCC 12472 / DSM 30191 / JCM 1249 / CCUG 213 / NBRC 12614 / NCIMB 9131 / NCTC 9757 / MK), this protein is UPF0597 protein CV_1824.